A 346-amino-acid chain; its full sequence is Probable electron transfer flavoprotein subunit alpha, mitochondrial (346 aa).

285-313 serves as a coordination point for FAD; it reads LYVAVGISGAIQHLAGMKESKMIVAINKD.

The protein belongs to the ETF alpha-subunit/FixB family. In terms of assembly, heterodimer of an alpha and a beta subunit. FAD serves as cofactor.

Its subcellular location is the mitochondrion matrix. The electron transfer flavoprotein serves as a specific electron acceptor for several dehydrogenases, including five acyl-CoA dehydrogenases, glutaryl-CoA and sarcosine dehydrogenase. It transfers the electrons to the main mitochondrial respiratory chain via ETF-ubiquinone oxidoreductase (ETF dehydrogenase). The sequence is that of Probable electron transfer flavoprotein subunit alpha, mitochondrial (ETF1) from Cryptococcus neoformans var. grubii (Filobasidiella neoformans var. grubii).